The chain runs to 136 residues: UPF0299 membrane protein PM0880 (136 aa).

4 consecutive transmembrane segments (helical) span residues 5-25, 29-49, 67-87, and 92-112; these read IVDL…GEWI, LNIG…GLTF, YMAL…DVLF, and VLLL…GLLS.

It belongs to the UPF0299 family.

Its subcellular location is the cell inner membrane. The polypeptide is UPF0299 membrane protein PM0880 (Pasteurella multocida (strain Pm70)).